A 358-amino-acid chain; its full sequence is Peptide chain release factor 1 (358 aa).

Gln-233 carries the post-translational modification N5-methylglutamine.

It belongs to the prokaryotic/mitochondrial release factor family. Methylated by PrmC. Methylation increases the termination efficiency of RF1.

The protein resides in the cytoplasm. Functionally, peptide chain release factor 1 directs the termination of translation in response to the peptide chain termination codons UAG and UAA. This is Peptide chain release factor 1 from Clostridium botulinum (strain ATCC 19397 / Type A).